Reading from the N-terminus, the 460-residue chain is DNA repair protein RAD57 (460 aa).

Residue 125–132 participates in ATP binding; it reads GESSTGKS.

It belongs to the RecA family.

It localises to the nucleus. Its function is as follows. Participates in the repair of X-ray-induced damage to DNA and in meiosis. It may act in part by stabilizing a repair complex of other RAD genes. The chain is DNA repair protein RAD57 (RAD57) from Saccharomyces cerevisiae (strain ATCC 204508 / S288c) (Baker's yeast).